The chain runs to 401 residues: (1R,4R,5S)-(-)-guaia-6,10(14)-diene synthase (401 aa).

Aspartate 134 and glutamate 139 together coordinate Mg(2+). A DDXXD motif motif is present at residues 134 to 138; it reads DDQFD. Arginine 242 provides a ligand contact to substrate. Positions 288 and 292 each coordinate Mg(2+). Lysine 295 provides a ligand contact to substrate. Aspartate 296 contacts Mg(2+). 375–376 is a substrate binding site; it reads RY.

The protein belongs to the terpene synthase family. Mg(2+) serves as cofactor.

It carries out the reaction (2E,6E)-farnesyl diphosphate = (1R,4R,5S)-(-)-guaia-6,10(14)-diene + diphosphate. It functions in the pathway secondary metabolite biosynthesis; terpenoid biosynthesis. Its function is as follows. Catalyzes the conversion of (2E,6E)-farnesyl diphosphate (FPP) to yield the bicyclic sesquiterpene guaia-6,10(14)-diene via a 1,10-cyclization, which requires the abstraction of the pyrophosphate from FPP to yield the (E,E)-germacradienyl cation. The only accepted substrate is farnesyl diphosphate (FPP). The chain is (1R,4R,5S)-(-)-guaia-6,10(14)-diene synthase from Fusarium mangiferae (Mango malformation disease fungus).